Reading from the N-terminus, the 436-residue chain is Acetyl-CoA decarbonylase/synthase complex subunit delta (436 aa).

Belongs to the CdhD family. Heterodimer of delta and gamma chains. The ACDS complex is made up of alpha, epsilon, beta, gamma and delta chains with a probable stoichiometry of (alpha(2)epsilon(2))(4)-beta(8)-(gamma(1)delta(1))(8).

The protein operates within one-carbon metabolism; methanogenesis from acetate. Part of a complex that catalyzes the reversible cleavage of acetyl-CoA, allowing growth on acetate as sole source of carbon and energy. Probably maintains the overall quaternary structure of the ACDS complex. The sequence is that of Acetyl-CoA decarbonylase/synthase complex subunit delta from Methanosarcina mazei (strain ATCC BAA-159 / DSM 3647 / Goe1 / Go1 / JCM 11833 / OCM 88) (Methanosarcina frisia).